We begin with the raw amino-acid sequence, 1330 residues long: Pre-mRNA-splicing factor CWC22 homolog (1330 aa).

The interval 1 to 377 (MGESDAESDS…AAKITERQRK (377 aa)) is disordered. Over residues 9–36 (DSSSNSSSSDTSSGSDSDARSESSSSES) the composition is skewed to low complexity. The segment covering 46 to 94 (QEESAKDAKKTDDTDRGEKRAKERDAGQDEQPTEQKKTPAAEPRSERQH) has biased composition (basic and acidic residues). Residues 99–113 (AGVEKQQEEAVAAAE) show a composition bias toward low complexity. Residues 115–135 (ESEKLNEAKKVETPVQRKEEA) are compositionally biased toward basic and acidic residues. A compositionally biased stretch (polar residues) spans 138–148 (SSVTKELNSPK). Basic and acidic residues predominate over residues 149 to 166 (AQEENAARELEERRKDEE). The span at 168–177 (PVTTNGSSKE) shows a compositional bias: polar residues. Phosphothreonine occurs at positions 191 and 201. 2 stretches are compositionally biased toward basic and acidic residues: residues 191–201 (TADHIEEGEIT) and 208–236 (LPTKEEKKAVASKSPPKETQRKQSRSPDG). S219 and S221 each carry phosphoserine. Residues 252 to 277 (SRRRRRSRSKGSRTRSRSKSPIRRRS) show a composition bias toward basic residues. Basic and acidic residues-rich tracts occupy residues 278 to 307 (NSLERRRVERQRRHEERDKRDEERAKEREK) and 316 to 325 (SSRRRDDSRE). Low complexity predominate over residues 355–366 (TETNADNETVTE). The region spanning 420–603 (KKSIHGYINK…EVLFQIRKDG (184 aa)) is the MIF4G domain. Positions 660–697 (REILGSDDGSSSGSGSGSDSDSDSDGESGSDAEKKAEA) are disordered. Positions 665 to 678 (SDDGSSSGSGSGSD) are enriched in low complexity. Over residues 679–689 (SDSDSDGESGS) the composition is skewed to acidic residues. Residues 710-826 (ALRRTIYLTI…SWDVLECIQL (117 aa)) form the MI domain. Positions 926–1330 (FRDGSAPAGN…RSSRRSKGRS (405 aa)) are disordered. The segment covering 941–951 (SSSSSSSSSSD) has biased composition (low complexity). The segment covering 952 to 963 (TDSEDSSEEDSS) has biased composition (acidic residues). The span at 964-976 (SDSSSESSSSDSS) shows a compositional bias: low complexity. Residues 980 to 1012 (KKKRKRKDKDKKKSKKATKEKSKKTKNKKKKKK) are compositionally biased toward basic residues. Basic and acidic residues predominate over residues 1013–1033 (AEKEQEKEKEKQRKSKKEKEK). Positions 1034–1054 (DKKRKKEEKKAAKKKSKHRRK) are enriched in basic residues. Low complexity predominate over residues 1072–1082 (SESSDSSNSSS). Over residues 1089 to 1110 (PQAKIKRQEHVEKNKFRGRTQD) the composition is skewed to basic and acidic residues. Residue T1108 is modified to Phosphothreonine. A phosphoserine mark is found at S1111, S1121, S1180, and S1181. Composition is skewed to basic and acidic residues over residues 1133–1195 (RRRD…VAHD) and 1203–1320 (SRSY…SRRE). Position 1182 is a phosphotyrosine (Y1182). Basic residues predominate over residues 1321-1330 (RSSRRSKGRS).

It belongs to the CWC22 family. In terms of assembly, component of the spliceosome C complex. Interacts with eIF4AIII.

The protein resides in the nucleus speckle. In terms of biological role, required for pre-mRNA splicing and for exon-junction complex (EJC) assembly. Hinders eIF4AIII from non-specifically binding RNA and escorts it to the splicing machinery to promote EJC assembly on mature mRNAs. The protein is Pre-mRNA-splicing factor CWC22 homolog (ncm) of Drosophila melanogaster (Fruit fly).